The primary structure comprises 175 residues: Apoptosis regulatory protein Siva (175 aa).

Tyrosine 34 bears the Phosphotyrosine; by ABL2 mark. The interval 36 to 55 is interaction with BCL2L1 isoform Bcl-x(L) and inhibition of BCL2L1 anti-apoptotic activity; sequence QEVFEKTKRLLFLGAQAYLD. Position 70 is a phosphoserine (serine 70). The segment at 105–123 is interaction with coxsackievirus B3 VP2; the sequence is DPSGVASIACSSCVRAVDG.

As to quaternary structure, binds through its N-terminal region to the C-terminus of CD27 and to PXMP2/PMP22. Binds to the C-terminus of TNFRSF18/GITR. Isoform 1 binds to BCL2L1/BCLX isoform Bcl-x(L) but not to BAX. In terms of assembly, (Microbial infection) Interacts with coxsackievirus B3 capsid protein VP2; this interaction inhibits the binding of SIVA1 to CD27. Requires Zn(2+) as cofactor. Phosphorylated by ABL2/ARG in response to oxidative stress. As to expression, ubiquitous. Mostly expressed in thymus, testis, ovary, prostate, small intestine and spleen and less in colon.

It is found in the cytoplasm. The protein localises to the nucleus. In terms of biological role, induces CD27-mediated apoptosis. Inhibits BCL2L1 isoform Bcl-x(L) anti-apoptotic activity. Inhibits activation of NF-kappa-B and promotes T-cell receptor-mediated apoptosis. The sequence is that of Apoptosis regulatory protein Siva (SIVA1) from Homo sapiens (Human).